Here is a 108-residue protein sequence, read N- to C-terminus: FK506-binding protein 1 (108 aa).

The PPIase FKBP-type domain occupies 20 to 108 (GDNVTIHYVG…KFEVELLKVN (89 aa)).

Belongs to the FKBP-type PPIase family. FKBP1 subfamily.

The protein resides in the cytoplasm. It carries out the reaction [protein]-peptidylproline (omega=180) = [protein]-peptidylproline (omega=0). Inhibited by both FK506 and rapamycin. In terms of biological role, PPIases accelerate the folding of proteins. It catalyzes the cis-trans isomerization of proline imidic peptide bonds in oligopeptides. This chain is FK506-binding protein 1 (FRR1), found in Cryptococcus neoformans var. grubii serotype A (strain H99 / ATCC 208821 / CBS 10515 / FGSC 9487) (Filobasidiella neoformans var. grubii).